The sequence spans 171 residues: Zinc finger A20 and AN1 domain-containing stress-associated protein 8 (171 aa).

An A20-type zinc finger spans residues 11 to 45; it reads PEGPILCINNCGFFGSAATMNMCSKCHKEMIMKQE. Residues Cys-17, Cys-21, Cys-33, Cys-36, Cys-112, Cys-115, Cys-126, Cys-128, Cys-133, His-136, His-142, and Cys-144 each coordinate Zn(2+). The AN1-type zinc finger occupies 106–152; sequence REGPNRCSTCRKRVGLTGFNCRCGNLYCAMHRYSDKHDCQFDYRTAA.

Its function is as follows. May be involved in environmental stress response. This is Zinc finger A20 and AN1 domain-containing stress-associated protein 8 (SAP8) from Oryza sativa subsp. indica (Rice).